The chain runs to 95 residues: Endoribonuclease VapD homolog (95 aa).

The protein belongs to the VapD ribonuclease family. As to quaternary structure, homodimer.

In terms of biological role, cleaves ssRNA, mostly between U:A. In Helicobacter pylori (strain ATCC 700392 / 26695) (Campylobacter pylori), this protein is Endoribonuclease VapD homolog.